The chain runs to 836 residues: Serine/threonine-protein kinase ppk5 (836 aa).

4 disordered regions span residues 1-29 (MVGL…FLSP), 192-214 (INQL…TLSS), 230-307 (CSQF…YKSI), and 328-381 (TPLD…ERQN). 3 stretches are compositionally biased toward polar residues: residues 192–205 (INQL…TNYP), 232–241 (QFASPRSSIV), and 265–288 (KPSN…TKLT). The span at 289–298 (SQRDNDHQKD) shows a compositional bias: basic and acidic residues. Residues 338-347 (SGKKFNKNSK) show a composition bias toward basic residues. Residues 353–362 (STISSYSSAS) show a composition bias toward low complexity. Residues 518-814 (YEIIDTVGKG…VDSALQHEFI (297 aa)) form the Protein kinase domain. Residues 524-532 (VGKGSFGQV) and Lys547 each bind ATP. The active-site Proton acceptor is Asp644. Position 678 is a phosphotyrosine (Tyr678).

This sequence belongs to the protein kinase superfamily. CMGC Ser/Thr protein kinase family. MNB/DYRK subfamily.

The protein localises to the cytoplasm. It catalyses the reaction L-seryl-[protein] + ATP = O-phospho-L-seryl-[protein] + ADP + H(+). The catalysed reaction is L-threonyl-[protein] + ATP = O-phospho-L-threonyl-[protein] + ADP + H(+). Its function is as follows. Has a role in meiosis. This is Serine/threonine-protein kinase ppk5 (ppk5) from Schizosaccharomyces pombe (strain 972 / ATCC 24843) (Fission yeast).